Here is a 486-residue protein sequence, read N- to C-terminus: PTS system N-acetylmuramic acid-specific EIIBC component (486 aa).

Positions 1–89 (MAKITQTMIS…NKLIESVING (89 aa)) constitute a PTS EIIB type-1 domain. Cysteine 28 serves as the catalytic Phosphocysteine intermediate; for EIIB activity. A PTS EIIC type-1 domain is found at 127–486 (SKFATIFTPL…FFGSKDVDLS (360 aa)). 10 consecutive transmembrane segments (helical) span residues 129 to 149 (FATI…LLGF), 170 to 190 (LIAY…ILIG), 196 to 216 (AFGG…LGYN), 230 to 250 (FFGY…AAII), 268 to 288 (MILT…VVIM), 312 to 332 (AAIL…QGFV), 347 to 367 (LFPI…ALYF), 381 to 401 (GAII…VTLP), 411 to 431 (IGGA…LPVG), and 453 to 473 (IFAG…VGFL).

It is found in the cell inner membrane. It catalyses the reaction N-acetyl-beta-D-muramate(out) + N(pros)-phospho-L-histidyl-[protein] = N-acetyl-beta-D-muramate 6-phosphate(in) + L-histidyl-[protein]. In terms of biological role, the phosphoenolpyruvate-dependent sugar phosphotransferase system (sugar PTS), a major carbohydrate active transport system, catalyzes the phosphorylation of incoming sugar substrates concomitantly with their translocation across the cell membrane. This system is involved in N-acetylmuramic acid (MurNAc) transport, yielding cytoplasmic MurNAc-6-P. Is also able to take up anhydro-N-acetylmuramic acid (anhMurNAc), but cannot phosphorylate the carbon 6, probably because of the 1,6-anhydro ring. This is PTS system N-acetylmuramic acid-specific EIIBC component (murP) from Vibrio vulnificus (strain CMCP6).